We begin with the raw amino-acid sequence, 427 residues long: 3-phosphoshikimate 1-carboxyvinyltransferase (427 aa).

Positions 22, 23, and 27 each coordinate 3-phosphoshikimate. Residue Lys-22 coordinates phosphoenolpyruvate. Residues Gly-96 and Arg-124 each contribute to the phosphoenolpyruvate site. Ser-169, Ser-170, Gln-171, Ser-197, Asp-313, Asn-336, and Lys-340 together coordinate 3-phosphoshikimate. Gln-171 contributes to the phosphoenolpyruvate binding site. Asp-313 (proton acceptor) is an active-site residue. Phosphoenolpyruvate contacts are provided by Arg-344, Arg-386, and Lys-411.

It belongs to the EPSP synthase family. As to quaternary structure, monomer.

The protein localises to the cytoplasm. It catalyses the reaction 3-phosphoshikimate + phosphoenolpyruvate = 5-O-(1-carboxyvinyl)-3-phosphoshikimate + phosphate. Its pathway is metabolic intermediate biosynthesis; chorismate biosynthesis; chorismate from D-erythrose 4-phosphate and phosphoenolpyruvate: step 6/7. In terms of biological role, catalyzes the transfer of the enolpyruvyl moiety of phosphoenolpyruvate (PEP) to the 5-hydroxyl of shikimate-3-phosphate (S3P) to produce enolpyruvyl shikimate-3-phosphate and inorganic phosphate. The polypeptide is 3-phosphoshikimate 1-carboxyvinyltransferase (Escherichia coli O1:K1 / APEC).